Reading from the N-terminus, the 137-residue chain is Large ribosomal subunit protein uL16 (137 aa).

The protein belongs to the universal ribosomal protein uL16 family. Part of the 50S ribosomal subunit.

Functionally, binds 23S rRNA and is also seen to make contacts with the A and possibly P site tRNAs. This Pseudomonas aeruginosa (strain LESB58) protein is Large ribosomal subunit protein uL16.